A 158-amino-acid chain; its full sequence is Adenosine 5'-monophosphoramidase HNT1 (158 aa).

The 104-residue stretch at 26-129 (IFCKIIKSEI…IPKRDEKSGL (104 aa)) folds into the HIT domain. AMP is bound by residues 51-52 (DI), asparagine 103, 109-111 (HQE), and 116-118 (HFH). The Histidine triad motif signature appears at 114–118 (HVHFH). The Tele-AMP-histidine intermediate role is filled by histidine 116.

Belongs to the HINT family. Homodimer. Interacts with KIN28. Mg(2+) serves as cofactor.

It catalyses the reaction adenosine 5'-phosphoramidate + H2O = AMP + NH4(+). In terms of biological role, hydrolyzes adenosine 5'-monophosphoramidate substrates such as AMP-morpholidate, AMP-N-alanine methyl ester, AMP-alpha-acetyl lysine methyl ester and AMP-NH2. Plays a role in the regulation of kinase KIN28 function. Essential for growth on galactose media at elevated temperatures. The chain is Adenosine 5'-monophosphoramidase HNT1 from Saccharomyces cerevisiae (strain ATCC 204508 / S288c) (Baker's yeast).